Consider the following 508-residue polypeptide: Maturase K (508 aa).

It belongs to the intron maturase 2 family. MatK subfamily.

The protein localises to the plastid. It is found in the chloroplast. Usually encoded in the trnK tRNA gene intron. Probably assists in splicing its own and other chloroplast group II introns. In Stewartia pseudocamellia (Japanese stewartia), this protein is Maturase K.